Here is a 491-residue protein sequence, read N- to C-terminus: Ran-binding protein 3-like (491 aa).

Positions 270-441 (TFKSVLKFPN…VALRSLAKQG (172 aa)) constitute a RanBD1 domain. A disordered region spans residues 440 to 468 (QGDGGPAESQSDTALPQLNGESCDEDEDE). Polar residues predominate over residues 447–459 (ESQSDTALPQLNG).

Interacts with SMAD1, SMAD5 and SMAD8.

The protein localises to the nucleus. It localises to the cytoplasm. In terms of biological role, nuclear export factor for BMP-specific SMAD1/5/8 that plays a critical role in terminating BMP signaling and regulating mesenchymal stem cell differentiation by blocking osteoblast differentiation to promote myogenic differention. Directly recognizes dephosphorylated SMAD1/5/8 and mediates their nuclear export in a Ran-dependent manner. This is Ran-binding protein 3-like (Ranbp3l) from Mus musculus (Mouse).